The chain runs to 753 residues: 5-methyltetrahydropteroyltriglutamate--homocysteine methyltransferase (753 aa).

5-methyltetrahydropteroyltri-L-glutamate is bound by residues Arg-17–Lys-20 and Lys-117. Residues Ile-431–Ser-433 and Glu-484 each bind L-homocysteine. L-methionine contacts are provided by residues Ile-431 to Ser-433 and Glu-484. Residues Arg-515–Cys-516 and Trp-561 contribute to the 5-methyltetrahydropteroyltri-L-glutamate site. Asp-599 lines the L-homocysteine pocket. An L-methionine-binding site is contributed by Asp-599. Glu-605 provides a ligand contact to 5-methyltetrahydropteroyltri-L-glutamate. Zn(2+) is bound by residues His-641, Cys-643, and Glu-665. Catalysis depends on His-694, which acts as the Proton donor. Cys-726 contacts Zn(2+).

This sequence belongs to the vitamin-B12 independent methionine synthase family. Monomer. Zn(2+) serves as cofactor.

The enzyme catalyses 5-methyltetrahydropteroyltri-L-glutamate + L-homocysteine = tetrahydropteroyltri-L-glutamate + L-methionine. It participates in amino-acid biosynthesis; L-methionine biosynthesis via de novo pathway; L-methionine from L-homocysteine (MetE route): step 1/1. Its function is as follows. Catalyzes the transfer of a methyl group from 5-methyltetrahydrofolate to homocysteine resulting in methionine formation. The protein is 5-methyltetrahydropteroyltriglutamate--homocysteine methyltransferase of Escherichia coli (strain K12).